The primary structure comprises 183 residues: Endoribonuclease AbiQ (183 aa).

This sequence belongs to the ToxN/AbiQ toxin family. In terms of assembly, forms a triangular heterohexamer with a single 35-nt-long repeat of RNA antitoxin AntiQ.

The protein resides in the cytoplasm. Its function is as follows. Toxic component of a type III toxin-antitoxin (TA) system. An endoribonuclease that is probably sequence-specific. It is neutralized by its cognate antitoxin RNA AntiQ, which has 2.8 35 nucleotide-long repeats. Cannot be cloned in L.lactis subsp. cremoris strain NZ9000 in the absence of the antitoxin gene; expression in strain NZ9000 even in the presence of antiQ inhibits growth in a bacteriostatic fashion. Confers resistance to 936 and c2 phages but not P335 phages in L.lactis, causes an abortive infection (Abi phenotype). Viral DNA is replicated but not cleaved from its concatemeric form, while the viral major structural protein is produced normally in the presence of this protein. Operon expression in E.coli confers resistance to 3 phages of the Myoviridae family (T4, RB69 and phage 2) and 1 of the Siphoviridae family (T5), but not other tested phages (T1, T3, lambda vir, HK97, Mu and pilH alpha). The presence of this operon in L.lactis subsp. lactis strain IL1403 during phage P008 infection alters the viral transcription profiles. The sequence is that of Endoribonuclease AbiQ from Lactococcus lactis subsp. lactis (Streptococcus lactis).